The chain runs to 488 residues: MEHQELNELVKVRLEKLSELRKMGIEPYGGKFERTHTAKEILDNFEQLVDKTVKIAGRIMAKRGHGKASFAHIQDMSGKIQIYARQNELGIDAYKLFEKLDIGDIIGVTGHVFKTQKGEITVWLSSFEILAKSLRPLPEKWHGLTDVELRYRQRYVDLIVNPEVRETFILRSRIVKTIREFLDQKGFLEVETPMMHPIAGGAAARPFITHHNALDMKLYLRIAPELYLKRLLVGGFEKVYEINRNFRNEGISTKHNPEFTMLELYQAYADYHDMMDITEELITHVAEKVLGTLEITYQGTPINLHRPWKRIPMLKAIEEATGVDFAGVKDPVQAYAKAKELGVPVEEGMGWGEIITAVFEEKVEPTLINPTFVIDYPVEVSPLAKRQKENPDLTYRFELFIYGREMANAFSELNDPIDQKERFLKQLEARAKGNEEAHMMDEDYITALEYGMPPAGGLGIGIDRLVMLLTDQASIRDVILFPLMRPRD.

Residues Glu398 and Glu405 each coordinate Mg(2+).

The protein belongs to the class-II aminoacyl-tRNA synthetase family. In terms of assembly, homodimer. Mg(2+) serves as cofactor.

Its subcellular location is the cytoplasm. The catalysed reaction is tRNA(Lys) + L-lysine + ATP = L-lysyl-tRNA(Lys) + AMP + diphosphate. This Carboxydothermus hydrogenoformans (strain ATCC BAA-161 / DSM 6008 / Z-2901) protein is Lysine--tRNA ligase.